Reading from the N-terminus, the 915-residue chain is Phototropin-2 (915 aa).

Residues 1–10 are compositionally biased toward pro residues; sequence MERPRAPPSP. 2 disordered regions span residues 1 to 62 and 84 to 118; these read MERP…EFQD and DDGI…GAFP. Serine 9 and serine 22 each carry phosphoserine. Positions 27–43 are enriched in polar residues; that stretch reads NPSSGKETHGSTSSSSK. A compositionally biased stretch (basic and acidic residues) spans 93–107; sequence SEVERSKNMSRRSSE. The PAS 1 domain maps to 120 to 193; that stretch reads VSQELKTALS…AKIRDCVKNG (74 aa). Serine 121 carries the phosphoserine modification. Residue asparagine 169 coordinates FMN. An S-4a-FMN cysteine modification is found at cysteine 170. Residues arginine 171, glutamine 174, arginine 187, asparagine 202, asparagine 212, glutamine 233, and lysine 238 each coordinate FMN. Positions 194–248 constitute a PAC 1 domain; the sequence is KSYCGRLLNYKKDGTPFWNLLTVTPIKDDQGNTIKFIGMQVEVSKYTEGVNDKAL. Residues 281–344 are disordered; that stretch reads HRKSQVQESV…KSSNNRHEDL (64 aa). Polar residues-rich tracts occupy residues 286 to 310 and 325 to 337; these read VQES…GRQT and RVST…LKSS. Serine 364 carries the post-translational modification Phosphoserine. The PAS 2 domain maps to 376-449; that stretch reads QGIDLATTLE…QKIRDAIRDQ (74 aa). Residue asparagine 425 coordinates FMN. S-4a-FMN cysteine is present on cysteine 426. 7 residues coordinate FMN: arginine 427, glutamine 430, arginine 443, asparagine 458, asparagine 468, phenylalanine 470, and glutamine 489. Positions 450–504 constitute a PAC 2 domain; sequence REITVQLINYTKSGKKFWNLFHLQPMRDQKGELQYFIGVQLDGSDHVEPLQNRLS. Residues 577–864 enclose the Protein kinase domain; sequence FKPIKPLGSG…ANEIKQHAFF (288 aa). ATP-binding positions include 583–591 and lysine 606; that span reads LGSGDTGSV. Aspartate 702 acts as the Proton acceptor in catalysis. The interval 720 to 774 is activation loop; the sequence is DFDLSFMTTCTPQLIIPAAPSKRRRSKSQPLPTFVAEPSTQSNSFVGTEEYIAPE.

This sequence belongs to the protein kinase superfamily. AGC Ser/Thr protein kinase family. In terms of assembly, homodimer. Interacts with PKS1, PKS2, RPT3 and PHOT1. Associates with CBC1 and CBC2. Binds to BHP. FMN serves as cofactor. Post-translationally, autophosphorylated in response to blue light irradiation. 2 molecules of FMN bind covalently to cysteines after exposure to blue light and are reversed in the dark. Expressed in leaves, stems and flowers, and to a lower extent in roots. Present in guard cells (at protein level).

It localises to the cell membrane. The catalysed reaction is L-seryl-[protein] + ATP = O-phospho-L-seryl-[protein] + ADP + H(+). The enzyme catalyses L-threonyl-[protein] + ATP = O-phospho-L-threonyl-[protein] + ADP + H(+). Its activity is regulated as follows. Autophosphorylation is inhibited by staurosporine, but not by tyrphostin 9, sphingosine, GW5074 and BML-265. In terms of biological role, protein kinase that acts as a blue light photoreceptor in a signal-transduction pathway for photo-induced movements. Triggers the phosphorylation of AHA1 and AHA2 C-terminal penultimate Thr in guard cells to activate them and induce stomatal opening in response to blue light (BL). Also phosphorylates BLUS1, a kinase involved in stomatal opening. Mediates calcium spiking of extra- and intracellular origins in response to blue light. Involved in hypocotyl phototropism. Contributes to the chloroplast accumulation in low blue light and mediates their translocation (avoidance response) at high fluence. Regulates stomata opening and photomorphogenesis response of leaf tissue. Not involved in hypocotyl elongation inhibition, anthocyanin accumulation or cotyledon opening. This is Phototropin-2 from Arabidopsis thaliana (Mouse-ear cress).